We begin with the raw amino-acid sequence, 254 residues long: MPNAQIPVLKKNRTKKRTSRKIAILLILLFIVLLAVLFFRSSLSRVSEIRFDGNVFSTRDQLLNRSGLAVGDQYFGVSSSDISEKLREIQSIQQVTVDKQFPGIIAIHIKEFATVAYELQSDGSLRAILANGTSVSVGSSGIAVEKPILTKWRSDDPYKAKLCDALSRIPGEWTADISEIIPAPIPSFPDRIKMYTRSQFEVITTVSLLNSKISYLNQVLETEDPGLITMLEADSYVPFKPDTSEEGQEKDTTQ.

The Cytoplasmic segment spans residues 1-21 (MPNAQIPVLKKNRTKKRTSRK). The helical transmembrane segment at 22–42 (IAILLILLFIVLLAVLFFRSS) threads the bilayer. The Extracellular segment spans residues 43 to 254 (LSRVSEIRFD…EEGQEKDTTQ (212 aa)). The region spanning 44–112 (SRVSEIRFDG…GIIAIHIKEF (69 aa)) is the POTRA domain.

This sequence belongs to the FtsQ/DivIB family. DivIB subfamily.

Its subcellular location is the cell membrane. In terms of biological role, cell division protein that may be involved in stabilizing or promoting the assembly of the division complex. The chain is Cell division protein DivIB from Paenibacillus polymyxa (strain E681).